The following is a 696-amino-acid chain: UV radiation resistance-associated gene protein (696 aa).

Phosphoserine is present on residues serine 214 and serine 218. Coiled coils occupy residues 251–278 and 330–394; these read LLTL…IARL and NAQQ…RLEL. A Phosphoserine modification is found at serine 666. The tract at residues 666–696 is disordered; sequence SYSDGEDEFRPRLEHNYSNSDSNITLQTERS. Tyrosine 667 carries the post-translational modification Phosphotyrosine. Phosphoserine is present on residues serine 668 and serine 685. Polar residues predominate over residues 681-696; sequence NYSNSDSNITLQTERS.

Involved in biosynthetic vesicle transport to lysosomes. Acts as a cell growth regulator. Also has a crucial role in controlling organ rotation by regulating membrane-localized Notch receptor endocytosis and subsequent degradation. Regulation of organ rotation is not by induction of autophagy. This Drosophila melanogaster (Fruit fly) protein is UV radiation resistance-associated gene protein (Uvrag).